The chain runs to 404 residues: Zinc finger TRAF-type-containing protein 1 (404 aa).

The segment covering 1–13 (MSGAEEAGGGGPA) has biased composition (gly residues). A disordered region spans residues 1–22 (MSGAEEAGGGGPAAGPAGSVPA). An RING-type; degenerate zinc finger spans residues 111–156 (CTVCLDLPKASVYQCTNGHLMCAGCFIHLLADARLKEEQATCPNCR). A TRAF-type zinc finger spans residues 152–225 (CPNCRCEISK…PWHGPFHELT (74 aa)).

This sequence belongs to the ZFTRAF1 family. As to quaternary structure, interacts with LGALS3.

It is found in the cytoplasm. The protein resides in the perinuclear region. The polypeptide is Zinc finger TRAF-type-containing protein 1 (Homo sapiens (Human)).